Reading from the N-terminus, the 262-residue chain is Sulfur carrier protein FdhD (262 aa).

The Cysteine persulfide intermediate role is filled by cysteine 105. 246-251 (FVRKNR) serves as a coordination point for Mo-bis(molybdopterin guanine dinucleotide).

Belongs to the FdhD family.

Its subcellular location is the cytoplasm. Functionally, required for formate dehydrogenase (FDH) activity. Acts as a sulfur carrier protein that transfers sulfur from IscS to the molybdenum cofactor prior to its insertion into FDH. The sequence is that of Sulfur carrier protein FdhD from Picrophilus torridus (strain ATCC 700027 / DSM 9790 / JCM 10055 / NBRC 100828 / KAW 2/3).